Consider the following 85-residue polypeptide: Cytochrome b (85 aa).

A run of 3 helical transmembrane segments spans residues 1-8 (LTGLFLAM), 32-53 (WLIR…YLHI), and 68-85 (WNVG…AFVG). Heme b is bound by residues histidine 38 and histidine 52.

It belongs to the cytochrome b family. As to quaternary structure, the cytochrome bc1 complex contains 3 respiratory subunits (MT-CYB, CYC1 and UQCRFS1), 2 core proteins (UQCRC1 and UQCRC2) and probably 6 low-molecular weight proteins. It depends on heme b as a cofactor.

The protein resides in the mitochondrion inner membrane. Its function is as follows. Component of the ubiquinol-cytochrome c reductase complex (complex III or cytochrome b-c1 complex) that is part of the mitochondrial respiratory chain. The b-c1 complex mediates electron transfer from ubiquinol to cytochrome c. Contributes to the generation of a proton gradient across the mitochondrial membrane that is then used for ATP synthesis. This Pomoxis nigromaculatus (Black crappie) protein is Cytochrome b (mt-cyb).